The primary structure comprises 714 residues: Forkhead box protein P2 (714 aa).

The span at 1 to 28 (MMQESATETISNSSMNQNGMSTLSSQLD) shows a compositional bias: polar residues. Disordered stretches follow at residues 1–45 (MMQE…SEVS) and 280–338 (DNGI…TGAS). The span at 291-304 (TTNNSSSTTSSTTS) shows a compositional bias: low complexity. The span at 314-323 (SIVNGQSSVL) shows a compositional bias: polar residues. Residues 325–336 (ARRDSSSHEETG) show a composition bias toward basic and acidic residues. Residues 345-370 (GVCKWPGCESICEDFGQFLKHLNNEH) form a C2H2-type zinc finger. Positions 387–408 (VQQLEIQLSKERERLQAMMTHL) are leucine-zipper. A CTBP1-binding region spans residues 421 to 425 (PLNLV). Over residues 437–458 (TSPQSLPQTPTTPTAPVTPITQ) the composition is skewed to low complexity. The segment at 437 to 464 (TSPQSLPQTPTTPTAPVTPITQGPSVIT) is disordered. The fork-head DNA-binding region spans 503–593 (RPPFTYATLI…SQKITGSPTL (91 aa)). Disordered stretches follow at residues 648-667 (LDHIDSNGNSSPGCSPQPHI) and 677-714 (VIAEDEDCPMSLVTTANHSPELEDDREIEEEPLSEDLE). Over residues 698-714 (LEDDREIEEEPLSEDLE) the composition is skewed to acidic residues.

Forms homodimers and heterodimers with FOXP1 and FOXP4. Dimerization is required for DNA-binding. Interacts with CTBP1. Interacts with FOXP1. Interacts with TBR1. Interacts with ZMYM2. Highest expression in lung. Lower expression in spleen, skeletal muscle, brain, kidney and small intestine.

The protein resides in the nucleus. Transcriptional repressor that may play a role in the specification and differentiation of lung epithelium. May also play a role in developing neural, gastrointestinal and cardiovascular tissues. Can act with CTBP1 to synergistically repress transcription but CTPBP1 is not essential. Plays a role in synapse formation by regulating SRPX2 levels. This Mus musculus (Mouse) protein is Forkhead box protein P2 (Foxp2).